A 405-amino-acid chain; its full sequence is Glucose-1-phosphate adenylyltransferase (405 aa).

Residues Y99, G164, 179–180, and S197 each bind alpha-D-glucose 1-phosphate; that span reads EK.

This sequence belongs to the bacterial/plant glucose-1-phosphate adenylyltransferase family. In terms of assembly, homotetramer.

It carries out the reaction alpha-D-glucose 1-phosphate + ATP + H(+) = ADP-alpha-D-glucose + diphosphate. Its pathway is glycan biosynthesis; glycogen biosynthesis. Its function is as follows. Involved in the biosynthesis of ADP-glucose, a building block required for the elongation reactions to produce glycogen. Catalyzes the reaction between ATP and alpha-D-glucose 1-phosphate (G1P) to produce pyrophosphate and ADP-Glc. This is Glucose-1-phosphate adenylyltransferase from Corynebacterium aurimucosum (strain ATCC 700975 / DSM 44827 / CIP 107346 / CN-1) (Corynebacterium nigricans).